Reading from the N-terminus, the 167-residue chain is Glutathione peroxidase 1 (167 aa).

C41 is an active-site residue.

The protein belongs to the glutathione peroxidase family.

The catalysed reaction is 2 glutathione + H2O2 = glutathione disulfide + 2 H2O. Functionally, may constitute a glutathione peroxidase-like protective system against oxidative stresses. This chain is Glutathione peroxidase 1 (GPXHA-1), found in Helianthus annuus (Common sunflower).